Here is a 144-residue protein sequence, read N- to C-terminus: Large ribosomal subunit protein uL11 (144 aa).

The protein belongs to the universal ribosomal protein uL11 family. In terms of assembly, part of the ribosomal stalk of the 50S ribosomal subunit. Interacts with L10 and the large rRNA to form the base of the stalk. L10 forms an elongated spine to which L12 dimers bind in a sequential fashion forming a multimeric L10(L12)X complex. One or more lysine residues are methylated.

Forms part of the ribosomal stalk which helps the ribosome interact with GTP-bound translation factors. The polypeptide is Large ribosomal subunit protein uL11 (Streptomyces avermitilis (strain ATCC 31267 / DSM 46492 / JCM 5070 / NBRC 14893 / NCIMB 12804 / NRRL 8165 / MA-4680)).